Reading from the N-terminus, the 274-residue chain is Cytochrome c oxidase subunit 3 (274 aa).

At 1-15 (MTHQTHAYHMVNPSP) the chain is on the mitochondrial matrix side. A helical membrane pass occupies residues 16-34 (WPLTGALSALLMTSGLAMW). Topologically, residues 35-40 (FHFNSS) are mitochondrial intermembrane. A helical transmembrane segment spans residues 41 to 66 (MLLSLGMLTNLLTMYQWWRDIVREGT). The Mitochondrial matrix portion of the chain corresponds to 67 to 72 (FQGHHT). The chain crosses the membrane as a helical span at residues 73 to 105 (SIVQKGLRYGMVLFIISEIFFFAGFFWAFYHSS). Residues 106 to 128 (LAPTPELGGCWPPTGIHPLNPLE) are Mitochondrial intermembrane-facing. The helical transmembrane segment at 129 to 152 (VPLLNTAVLLASGVSITWAHHSLM) threads the bilayer. Over 153–155 (EGN) the chain is Mitochondrial matrix. A helical membrane pass occupies residues 156 to 183 (RVQMLQALLITITLGLYFTLLQASEYFE). Residues 184–190 (TSFTISD) lie on the Mitochondrial intermembrane side of the membrane. Residues 191 to 223 (GVYGSTFFMATGFHGLHVIIGSTFLTVCFFRQL) traverse the membrane as a helical segment. Residues 224–232 (SFHFTSNHH) are Mitochondrial matrix-facing. The helical transmembrane segment at 233–256 (FGFEAAAWYWHFVDVVWLFLYVSI) threads the bilayer. Residues 257–274 (YWWGSYSFSIDPMQLTSN) lie on the Mitochondrial intermembrane side of the membrane.

This sequence belongs to the cytochrome c oxidase subunit 3 family. As to quaternary structure, component of the cytochrome c oxidase (complex IV, CIV), a multisubunit enzyme composed of 14 subunits. The complex is composed of a catalytic core of 3 subunits MT-CO1, MT-CO2 and MT-CO3, encoded in the mitochondrial DNA, and 11 supernumerary subunits COX4I, COX5A, COX5B, COX6A, COX6B, COX6C, COX7A, COX7B, COX7C, COX8 and NDUFA4, which are encoded in the nuclear genome. The complex exists as a monomer or a dimer and forms supercomplexes (SCs) in the inner mitochondrial membrane with NADH-ubiquinone oxidoreductase (complex I, CI) and ubiquinol-cytochrome c oxidoreductase (cytochrome b-c1 complex, complex III, CIII), resulting in different assemblies (supercomplex SCI(1)III(2)IV(1) and megacomplex MCI(2)III(2)IV(2)).

It is found in the mitochondrion inner membrane. The enzyme catalyses 4 Fe(II)-[cytochrome c] + O2 + 8 H(+)(in) = 4 Fe(III)-[cytochrome c] + 2 H2O + 4 H(+)(out). In terms of biological role, component of the cytochrome c oxidase, the last enzyme in the mitochondrial electron transport chain which drives oxidative phosphorylation. The respiratory chain contains 3 multisubunit complexes succinate dehydrogenase (complex II, CII), ubiquinol-cytochrome c oxidoreductase (cytochrome b-c1 complex, complex III, CIII) and cytochrome c oxidase (complex IV, CIV), that cooperate to transfer electrons derived from NADH and succinate to molecular oxygen, creating an electrochemical gradient over the inner membrane that drives transmembrane transport and the ATP synthase. Cytochrome c oxidase is the component of the respiratory chain that catalyzes the reduction of oxygen to water. Electrons originating from reduced cytochrome c in the intermembrane space (IMS) are transferred via the dinuclear copper A center (CU(A)) of subunit 2 and heme A of subunit 1 to the active site in subunit 1, a binuclear center (BNC) formed by heme A3 and copper B (CU(B)). The BNC reduces molecular oxygen to 2 water molecules using 4 electrons from cytochrome c in the IMS and 4 protons from the mitochondrial matrix. This chain is Cytochrome c oxidase subunit 3 (MT-CO3), found in Lemur catta (Ring-tailed lemur).